The sequence spans 269 residues: Formamidopyrimidine-DNA glycosylase (269 aa).

Catalysis depends on P2, which acts as the Schiff-base intermediate with DNA. E3 serves as the catalytic Proton donor. The active-site Proton donor; for beta-elimination activity is K57. Residues H90, R109, and K150 each contribute to the DNA site. The FPG-type zinc finger occupies 235 to 269; that stretch reads QVYGRKGEPCRVCGTPIVATKHAQRATFYCRHCQK. R259 acts as the Proton donor; for delta-elimination activity in catalysis.

This sequence belongs to the FPG family. In terms of assembly, monomer. Requires Zn(2+) as cofactor.

It catalyses the reaction Hydrolysis of DNA containing ring-opened 7-methylguanine residues, releasing 2,6-diamino-4-hydroxy-5-(N-methyl)formamidopyrimidine.. It carries out the reaction 2'-deoxyribonucleotide-(2'-deoxyribose 5'-phosphate)-2'-deoxyribonucleotide-DNA = a 3'-end 2'-deoxyribonucleotide-(2,3-dehydro-2,3-deoxyribose 5'-phosphate)-DNA + a 5'-end 5'-phospho-2'-deoxyribonucleoside-DNA + H(+). Functionally, involved in base excision repair of DNA damaged by oxidation or by mutagenic agents. Acts as a DNA glycosylase that recognizes and removes damaged bases. Has a preference for oxidized purines, such as 7,8-dihydro-8-oxoguanine (8-oxoG). Has AP (apurinic/apyrimidinic) lyase activity and introduces nicks in the DNA strand. Cleaves the DNA backbone by beta-delta elimination to generate a single-strand break at the site of the removed base with both 3'- and 5'-phosphates. The polypeptide is Formamidopyrimidine-DNA glycosylase (Salmonella choleraesuis (strain SC-B67)).